The sequence spans 587 residues: Kelch-like protein 3 (587 aa).

S10 is modified (phosphoserine). Positions 50–117 (CDVMIVAEDV…VYTAEIEVTE (68 aa)) constitute a BTB domain. The BACK domain maps to 152 to 254 (CLGIRAFADV…PRDYLVQTVE (103 aa)). Position 295 is a phosphothreonine (T295). 6 Kelch repeats span residues 302-347 (VMIV…FMAG), 348-394 (HVYA…VLND), 396-441 (LYAV…VVEG), 442-490 (KLYA…VLSG), 491-537 (QLYA…AVNG), and 539-585 (LYVV…VIHK). T375 bears the Phosphothreonine mark. 2 positions are modified to phosphoserine: S376 and S433.

The protein belongs to the KLHL3 family. Homodimer. Component of the BCR(KLHL3) E3 ubiquitin ligase complex, at least composed of CUL3 and KLHL3 and RBX1. Interacts with CLDN8. Post-translationally, phosphorylation at Ser-433 by PKA or PKC decreases the interaction with WNK1 and WNK4, leading to inhibit their degradation by the BCR(KLHL3) complex. Phosphorylated at Ser-433 by PKC in response to angiotensin II signaling, decreasing ability to promote degradation of WNK1 and WNK4, leading to activation of Na-Cl cotransporter SLC12A3/NCC. Phosphorylation at Ser-433 is increased by insulin. Dephosphorylated at Ser-433 by calcineurin PPP3CA, promoting degradation of WNK1 and WNK4.

It is found in the cytoplasm. Its subcellular location is the cytoskeleton. The protein localises to the cytosol. It functions in the pathway protein modification; protein ubiquitination. In terms of biological role, substrate-specific adapter of a BCR (BTB-CUL3-RBX1) E3 ubiquitin ligase complex that acts as a regulator of ion transport in the distal nephron. The BCR(KLHL3) complex acts by mediating ubiquitination and degradation of WNK1 and WNK4, two activators of Na-Cl cotransporter SLC12A3/NCC in distal convoluted tubule cells of kidney, thereby regulating NaCl reabsorption. The BCR(KLHL3) complex also mediates ubiquitination and degradation of WNK3. The BCR(KLHL3) complex also mediates ubiquitination of CLDN8, a tight-junction protein required for paracellular chloride transport in the kidney, leading to its degradation. The chain is Kelch-like protein 3 (KLHL3) from Pongo abelii (Sumatran orangutan).